The primary structure comprises 185 residues: Elongation factor P (185 aa).

The protein belongs to the elongation factor P family.

It is found in the cytoplasm. Its pathway is protein biosynthesis; polypeptide chain elongation. Functionally, involved in peptide bond synthesis. Stimulates efficient translation and peptide-bond synthesis on native or reconstituted 70S ribosomes in vitro. Probably functions indirectly by altering the affinity of the ribosome for aminoacyl-tRNA, thus increasing their reactivity as acceptors for peptidyl transferase. The polypeptide is Elongation factor P (Clostridium tetani (strain Massachusetts / E88)).